The following is a 43-amino-acid chain: Protein PsbN (43 aa).

A helical transmembrane segment spans residues 7 to 29; that stretch reads VAIFLSGLLVSFTGYALYTAFGQ.

Belongs to the PsbN family.

The protein localises to the plastid. Its subcellular location is the chloroplast thylakoid membrane. Its function is as follows. May play a role in photosystem I and II biogenesis. In Draba nemorosa (Woodland whitlowgrass), this protein is Protein PsbN.